A 201-amino-acid chain; its full sequence is Small ribosomal subunit protein uS4 (201 aa).

Residues 91–154 (TRLDNVVYRA…RKMEWFEEAQ (64 aa)) enclose the S4 RNA-binding domain.

This sequence belongs to the universal ribosomal protein uS4 family. Part of the 30S ribosomal subunit. Contacts protein S5. The interaction surface between S4 and S5 is involved in control of translational fidelity.

One of the primary rRNA binding proteins, it binds directly to 16S rRNA where it nucleates assembly of the body of the 30S subunit. In terms of biological role, with S5 and S12 plays an important role in translational accuracy. This chain is Small ribosomal subunit protein uS4, found in Corynebacterium ammoniagenes (Brevibacterium ammoniagenes).